A 104-amino-acid polypeptide reads, in one-letter code: UPF0473 protein LJ_0477 (104 aa).

Belongs to the UPF0473 family.

This is UPF0473 protein LJ_0477 from Lactobacillus johnsonii (strain CNCM I-12250 / La1 / NCC 533).